We begin with the raw amino-acid sequence, 720 residues long: Protein-glutamine gamma-glutamyltransferase 5 (720 aa).

An N-acetylalanine modification is found at alanine 2. Catalysis depends on residues cysteine 278, histidine 337, and aspartate 360. The Ca(2+) site is built by asparagine 400, aspartate 402, glutamate 448, and glutamate 453. Residues 470 to 499 (HGSQRGAELQPSRPTSLSQDSPRSLHTPSL) form a disordered region. Polar residues predominate over residues 481 to 496 (SRPTSLSQDSPRSLHT).

Belongs to the transglutaminase superfamily. Transglutaminase family. The cofactor is Ca(2+). Expressed in foreskin keratinocytes.

The protein resides in the cytoplasm. The enzyme catalyses L-glutaminyl-[protein] + L-lysyl-[protein] = [protein]-L-lysyl-N(6)-5-L-glutamyl-[protein] + NH4(+). Its function is as follows. Catalyzes the cross-linking of proteins and the conjugation of polyamines to proteins. Contributes to the formation of the cornified cell envelope of keratinocytes. The sequence is that of Protein-glutamine gamma-glutamyltransferase 5 (TGM5) from Homo sapiens (Human).